Consider the following 305-residue polypeptide: Spore coat protein CotA (305 aa).

The protein localises to the spore coat. Its subcellular location is the spore. The protein resides in the perispore. Its function is as follows. Contributes to maintain proper thickness of the spore coat. May contribute to the formation of polar appendages. May play an important role in assembly of the outer layers of the spore coat. This is Spore coat protein CotA from Clostridioides difficile (strain 630) (Peptoclostridium difficile).